The chain runs to 1167 residues: Integrin alpha-E (1167 aa).

Residues 1-19 form the signal peptide; it reads MKWLFHTLLCMASLKPQGA. The Extracellular segment spans residues 20–1114; it reads FNLDVDWAWV…IFLKEEETRS (1095 aa). 2 FG-GAP repeats span residues 27-81 and 84-142; these read AWVT…PDEI and QPVE…LQAQ. Asn51 carries an N-linked (GlcNAc...) asparagine glycan. Cystine bridges form between Cys72/Cys83 and Cys130/Cys164. The segment at 149-192 is X-domain (extra domain); the sequence is EGFLDPGAHVDSGDYCRSKGGSTGEEKKSARRRRTVEEEDEEED. Residues 163 to 191 are disordered; the sequence is YCRSKGGSTGEEKKSARRRRTVEEEDEEE. The VWFA domain occupies 193–382; the sequence is GTEIAIVLDG…SKLQQHIVHM (190 aa). 6 N-linked (GlcNAc...) asparagine glycosylation sites follow: Asn256, Asn314, Asn341, Asn364, Asn418, and Asn437. Residues 383–435 form an FG-GAP 3 repeat; that stretch reads EGTVGDALQYQLAQTGFSAQILDKGQVLLGTVGAFNWSGGALLYSTQNGRGCF. 4 FG-GAP repeats span residues 438-491, 492-552, 555-619, and 623-683; these read QTAK…REED, AFVR…DASF, AHTL…GLYD, and QQIR…FTPD. Ca(2+)-binding residues include Asp514, Asp516, Asp518, Asp522, Asp578, Asn580, Asp582, Asp586, Asp646, Asn648, Asp650, and Asp654. Residues Cys698 and Cys754 are joined by a disulfide bond. N-linked (GlcNAc...) asparagine glycans are attached at residues Asn718 and Asn773. Cys814 and Cys820 are joined by a disulfide. N-linked (GlcNAc...) asparagine glycosylation is found at Asn829 and Asn846. Residues Cys884 and Cys898 are joined by a disulfide bond. 4 N-linked (GlcNAc...) asparagine glycosylation sites follow: Asn911, Asn925, Asn968, and Asn1013. Intrachain disulfides connect Cys998–Cys1023 and Cys1031–Cys1047. Residues Asn1055 and Asn1086 are each glycosylated (N-linked (GlcNAc...) asparagine). Residues 1115–1137 form a helical membrane-spanning segment; that stretch reads LPLIIGSSIGGLLVLVVIIAILF. Over 1138 to 1167 the chain is Cytoplasmic; that stretch reads KCGFFKRKYQQLNLESTRRAQLKADSLLQD. Residues 1140-1144 carry the GFFKR motif motif; sequence GFFKR.

It belongs to the integrin alpha chain family. Heterodimer of an alpha and a beta subunit. The alpha subunit is composed of a heavy and a light chains linked by a disulfide bond. Alpha-E associates with beta-7.

It localises to the membrane. Its function is as follows. Integrin alpha-E/beta-7 is a receptor for E-cadherin. It mediates adhesion of intra-epithelial T-lymphocytes to epithelial cell monolayers. Mice expressing a null mutation of the alpha-E subunit gene exhibit a marked reduction in the numbers of intraepithelial lymphocytes in the gut and in the development of gut-associated lymphoid aggregates, supporting a specific role for this integrin in mediating retention of lymphocytes in the intestinal wall. The sequence is that of Integrin alpha-E (Itgae) from Mus musculus (Mouse).